A 113-amino-acid chain; its full sequence is Chaperone protein SigE (113 aa).

The protein belongs to the IpgE/SigE chaperone family. As to quaternary structure, homodimer or higher-order oligomers.

It localises to the cytoplasm. Functionally, molecular chaperone required for SopB/SigD stabilization and secretion. The sequence is that of Chaperone protein SigE (sigE) from Salmonella paratyphi A (strain ATCC 9150 / SARB42).